Consider the following 419-residue polypeptide: 3-isopropylmalate dehydratase large subunit (419 aa).

3 residues coordinate [4Fe-4S] cluster: C300, C360, and C363.

This sequence belongs to the aconitase/IPM isomerase family. LeuC type 2 subfamily. In terms of assembly, heterodimer of LeuC and LeuD. The cofactor is [4Fe-4S] cluster.

The enzyme catalyses (2R,3S)-3-isopropylmalate = (2S)-2-isopropylmalate. The protein operates within amino-acid biosynthesis; L-leucine biosynthesis; L-leucine from 3-methyl-2-oxobutanoate: step 2/4. Catalyzes the isomerization between 2-isopropylmalate and 3-isopropylmalate, via the formation of 2-isopropylmaleate. In Acetivibrio thermocellus (strain ATCC 27405 / DSM 1237 / JCM 9322 / NBRC 103400 / NCIMB 10682 / NRRL B-4536 / VPI 7372) (Clostridium thermocellum), this protein is 3-isopropylmalate dehydratase large subunit.